Reading from the N-terminus, the 116-residue chain is Iron-sulfur cluster insertion protein ErpA (116 aa).

Residues Cys-44, Cys-108, and Cys-110 each coordinate iron-sulfur cluster.

It belongs to the HesB/IscA family. In terms of assembly, homodimer. Iron-sulfur cluster serves as cofactor.

Its function is as follows. Required for insertion of 4Fe-4S clusters for at least IspG. The sequence is that of Iron-sulfur cluster insertion protein ErpA from Shewanella putrefaciens (strain CN-32 / ATCC BAA-453).